Here is a 219-residue protein sequence, read N- to C-terminus: Mediator of RNA polymerase II transcription subunit 20 (219 aa).

Belongs to the Mediator complex subunit 20 family. Component of the Mediator complex.

It is found in the nucleus. In terms of biological role, component of the Mediator complex, a coactivator involved in the regulated transcription of nearly all RNA polymerase II-dependent genes. Mediator functions as a bridge to convey information from gene-specific regulatory proteins to the basal RNA polymerase II transcription machinery. Mediator is recruited to promoters by direct interactions with regulatory proteins and serves as a scaffold for the assembly of a functional preinitiation complex with RNA polymerase II and the general transcription factors. This chain is Mediator of RNA polymerase II transcription subunit 20 (MED20), found in Aedes aegypti (Yellowfever mosquito).